We begin with the raw amino-acid sequence, 159 residues long: uncharacterized protein (159 aa).

The N-acetyltransferase domain maps to 4-153; that stretch reads IKTDDLTHPA…HSRFLSLTLC (150 aa).

It belongs to the acetyltransferase family.

This is an uncharacterized protein from Escherichia coli (strain K12).